A 123-amino-acid chain; its full sequence is Small ribosomal subunit protein uS12c (123 aa).

This sequence belongs to the universal ribosomal protein uS12 family. In terms of assembly, part of the 30S ribosomal subunit.

The protein localises to the plastid. The protein resides in the chloroplast. Its function is as follows. With S4 and S5 plays an important role in translational accuracy. Located at the interface of the 30S and 50S subunits. This chain is Small ribosomal subunit protein uS12c (rps12), found in Anthoceros angustus (Hornwort).